The chain runs to 291 residues: Serine hydrolase BPHL (291 aa).

A signal peptide spans 1–37 (MATATVRPAAQRLRLLLSPLKSRICVPQAEPVATFGT). The AB hydrolase-1 domain maps to 62 to 173 (AILLLPGMLG…ANAYVTEEDS (112 aa)). Position 74 is an N6-acetyllysine; alternate (K74). K74 carries the post-translational modification N6-succinyllysine; alternate. Residues K86 and K119 each carry the N6-acetyllysine modification. K126 is modified (N6-acetyllysine; alternate). Residue K126 is modified to N6-succinyllysine; alternate. S139 serves as the catalytic Nucleophile. Residue K184 is modified to N6-succinyllysine. K191 is subject to N6-acetyllysine; alternate. The residue at position 191 (K191) is an N6-succinyllysine; alternate. The residue at position 217 (K217) is an N6-acetyllysine. E221 provides a ligand contact to Mg(2+). An N6-acetyllysine modification is found at K243. The active-site Charge relay system is D244. An N6-acetyllysine; alternate mark is found at K260 and K271. Residues K260 and K271 each carry the N6-succinyllysine; alternate modification. The active-site Charge relay system is the H272.

Belongs to the AB hydrolase superfamily. Lipase family. In terms of assembly, monomer. May also form homodimers.

The protein resides in the mitochondrion. The catalysed reaction is L-homocysteine thiolactone + H2O = L-homocysteine + H(+). It carries out the reaction valacyclovir + H2O = acyclovir + L-valine + H(+). Its function is as follows. Specific alpha-amino acid ester serine hydrolase that prefers small, hydrophobic, and aromatic side chains and does not have a stringent requirement for the leaving group other than preferring a primary alcohol. Has homocysteine-thiolactonase activity (in vitro) and may play a significant role in the detoxification of homocysteine thiolactone in vivo. Catalyzes the hydrolytic activation of amino acid ester prodrugs of nucleoside analogs such as valacyclovir and valganciclovir, converting them into their active forms (acyclovir and ganciclovir). This Mus musculus (Mouse) protein is Serine hydrolase BPHL (Bphl).